Consider the following 228-residue polypeptide: 2,3-bisphosphoglycerate-dependent phosphoglycerate mutase (228 aa).

Substrate is bound by residues 8 to 15 (RHGQSEWN), 21 to 22 (TG), R60, 87 to 90 (ERHY), K98, 114 to 115 (RR), and 180 to 181 (GN). The Tele-phosphohistidine intermediate role is filled by H9. The active-site Proton donor/acceptor is E87.

Belongs to the phosphoglycerate mutase family. BPG-dependent PGAM subfamily. Homodimer.

It catalyses the reaction (2R)-2-phosphoglycerate = (2R)-3-phosphoglycerate. The protein operates within carbohydrate degradation; glycolysis; pyruvate from D-glyceraldehyde 3-phosphate: step 3/5. In terms of biological role, catalyzes the interconversion of 2-phosphoglycerate and 3-phosphoglycerate. The chain is 2,3-bisphosphoglycerate-dependent phosphoglycerate mutase from Zymomonas mobilis subsp. mobilis (strain ATCC 31821 / ZM4 / CP4).